A 354-amino-acid chain; its full sequence is Nicotinate-nucleotide--dimethylbenzimidazole phosphoribosyltransferase (354 aa).

E319 serves as the catalytic Proton acceptor.

It belongs to the CobT family.

The catalysed reaction is 5,6-dimethylbenzimidazole + nicotinate beta-D-ribonucleotide = alpha-ribazole 5'-phosphate + nicotinate + H(+). It participates in nucleoside biosynthesis; alpha-ribazole biosynthesis; alpha-ribazole from 5,6-dimethylbenzimidazole: step 1/2. Its function is as follows. Catalyzes the synthesis of alpha-ribazole-5'-phosphate from nicotinate mononucleotide (NAMN) and 5,6-dimethylbenzimidazole (DMB). This Chlorobium chlorochromatii (strain CaD3) protein is Nicotinate-nucleotide--dimethylbenzimidazole phosphoribosyltransferase.